Consider the following 370-residue polypeptide: MRNLDFIDSFIPTEGKYIRVMDFYNSEYPFCIHAPSAPNGDIMTEICSRENNQYFIFFPTDDGRVIIANRHNGSVFTGEATSVVSDIYTGSPLQFFREFKRTMSTYYLAIQNPESATDVRALEPNSHELPSRLYFTNNIENNSNILISNKEQIYLTLPSLPENEQYPKTPVLSGIDDIGPNQSEKSIIGSTLIPCIMVSDFISLGERMKTTPYYYVKHTQYWQSMWSALFPPGSKETKTEKSGITDTSQISMTDGINVSIGADFGLKFGNKTFGIKGGFTYDTKTQITNTSQLLIETTYTREYTNTENFPVRYTGYVLASEFTLHRSDGTQVNTIPWVALNDNYTTIARYPHFASEPLLGNTKIITDDQN.

The propeptide occupies 1–6; it reads MRNLDF. Positions 1–155 are beta-trefoil domain; it reads MRNLDFIDSF…LISNKEQIYL (155 aa). A disulfide bond links Cys31 and Cys47. Residues 156-370 are pore-forming domain; it reads TLPSLPENEQ…NTKIITDDQN (215 aa).

This sequence belongs to the toxin_10 family. As to quaternary structure, forms a heterodimer with BinB. Processed by proteases in the mosquito gut, probably at both the N- and C-termini.

It is found in the spore. Its subcellular location is the perispore. In terms of biological role, component of a binary toxin active against Culex and some Aedes mosquito larvae. The individual subunits are not toxic. BinAB binds to the gastric caecum and posterior midgut of C.quinquefasciatus larvae; this subunit alone binds the entire larval gut. Binary toxin internalization into host gut cells requires both proteins. Toxic to Aedes atropalpus mosquito larvae; mortality towards both C.quinquefasciatus and A.atropalpus is maximal by 48 hours. A.aegypti is not very susceptible to this toxin. The sequence is that of Binary larvicide subunit BinA (binA) from Lysinibacillus sphaericus (Bacillus sphaericus).